The following is a 495-amino-acid chain: ATP synthase subunit beta, chloroplastic (495 aa).

172–179 is an ATP binding site; it reads GGAGVGKT.

It belongs to the ATPase alpha/beta chains family. F-type ATPases have 2 components, CF(1) - the catalytic core - and CF(0) - the membrane proton channel. CF(1) has five subunits: alpha(3), beta(3), gamma(1), delta(1), epsilon(1). CF(0) has four main subunits: a(1), b(1), b'(1) and c(9-12).

It localises to the plastid. The protein localises to the chloroplast thylakoid membrane. The enzyme catalyses ATP + H2O + 4 H(+)(in) = ADP + phosphate + 5 H(+)(out). Its function is as follows. Produces ATP from ADP in the presence of a proton gradient across the membrane. The catalytic sites are hosted primarily by the beta subunits. This Hyacinthoides non-scripta (English bluebell) protein is ATP synthase subunit beta, chloroplastic.